We begin with the raw amino-acid sequence, 479 residues long: MASIAEMQKPHAICIPYPAQGHINPMMQFAKLLHFKGFHISFVNNHYNHKRLQRSRGLSALEGLPDFHFYSIPDGLPPSNAEATQSIPGLCESIPKHSLEPFCDLIATLNGSDVPPVSCIISDGVMSFTLQAAERFGLPEVLFWTPSACGFLAYTHYRDLVDKEYIPLKDTNDLTNGYLETSLDWIPGMKNIRLKDFPSFIRTTDINDIMLNYFLIETEAIPKGVAIILNTFDALEKDSITPVLALNPQIYTIGPLHMMQQYVDHDERLKHIGSNLWKEDVSCINWLDTKKPNSVVYVNFGSITVMTKEQLIEFGWGLANSKKDFLWITRPDIVGGNEAMIPAEFIEETKERGMVTSWCSQEEVLKHPSIGVFLTHSGWNSTIESISNGVPMICWPFFAEQQTNCRYCCVEWEIGLEIDTDVKREEVEAQVREMMDGSKGKMMKNKALEWKKKAEEAVSIGGSSYLNFEKLVTDVLLRK.

Residues Ser302, 358 to 359 (WC), 376 to 384 (HSGWNSTIE), and 398 to 401 (FAEQ) contribute to the UDP-alpha-D-glucose site.

Belongs to the UDP-glycosyltransferase family.

Its function is as follows. May glycosylate diterpenes or flavonols in leaves. The protein is UDP-glycosyltransferase 85A8 of Stevia rebaudiana (Stevia).